The following is a 304-amino-acid chain: N-acetyl-D-glucosamine kinase (304 aa).

ATP-binding positions include 4–11 (GFDMGGTK) and 133–140 (GLGGGLVI). 4 residues coordinate Zn(2+): histidine 157, cysteine 177, cysteine 179, and cysteine 184.

It belongs to the ROK (NagC/XylR) family. NagK subfamily.

The enzyme catalyses N-acetyl-D-glucosamine + ATP = N-acetyl-D-glucosamine 6-phosphate + ADP + H(+). It functions in the pathway cell wall biogenesis; peptidoglycan recycling. In terms of biological role, catalyzes the phosphorylation of N-acetyl-D-glucosamine (GlcNAc) derived from cell-wall degradation, yielding GlcNAc-6-P. This Pectobacterium atrosepticum (strain SCRI 1043 / ATCC BAA-672) (Erwinia carotovora subsp. atroseptica) protein is N-acetyl-D-glucosamine kinase.